The sequence spans 227 residues: tRNA (guanine-N(1)-)-methyltransferase (227 aa).

S-adenosyl-L-methionine is bound by residues G110 and 129–134 (IGDYVL).

The protein belongs to the RNA methyltransferase TrmD family. As to quaternary structure, homodimer.

The protein localises to the cytoplasm. The enzyme catalyses guanosine(37) in tRNA + S-adenosyl-L-methionine = N(1)-methylguanosine(37) in tRNA + S-adenosyl-L-homocysteine + H(+). Functionally, specifically methylates guanosine-37 in various tRNAs. This is tRNA (guanine-N(1)-)-methyltransferase from Mycoplasmopsis synoviae (strain 53) (Mycoplasma synoviae).